A 539-amino-acid polypeptide reads, in one-letter code: Protoporphyrinogen oxidase (539 aa).

FAD-binding positions include 18–23 (GGGVSG), 43–44 (ES), Trp51, 70–73 (GPRT), Val300, and 521–523 (PGV).

This sequence belongs to the protoporphyrinogen/coproporphyrinogen oxidase family. Protoporphyrinogen oxidase subfamily. It depends on FAD as a cofactor.

It is found in the mitochondrion inner membrane. It catalyses the reaction protoporphyrinogen IX + 3 O2 = protoporphyrin IX + 3 H2O2. It participates in porphyrin-containing compound metabolism; protoporphyrin-IX biosynthesis; protoporphyrin-IX from protoporphyrinogen-IX: step 1/1. Functionally, catalyzes the 6-electron oxidation of protoporphyrinogen-IX to form protoporphyrin-IX. This is Protoporphyrinogen oxidase from Saccharomyces cerevisiae (strain ATCC 204508 / S288c) (Baker's yeast).